The primary structure comprises 370 residues: Aspartate-semialdehyde dehydrogenase (370 aa).

Residues 10-13, 37-38, and Gln73 contribute to the NADP(+) site; these read RGMV and TS. Arg102 lines the phosphate pocket. Catalysis depends on Cys135, which acts as the Acyl-thioester intermediate. Residue Gln162 coordinates substrate. Residues 165 to 166 and Pro193 each bind NADP(+); that span reads SG. Glu241 provides a ligand contact to substrate. Residue Lys244 participates in phosphate binding. Residue Arg268 coordinates substrate. His275 functions as the Proton acceptor in the catalytic mechanism. NADP(+) is bound at residue Gln351.

Belongs to the aspartate-semialdehyde dehydrogenase family. In terms of assembly, homodimer.

It carries out the reaction L-aspartate 4-semialdehyde + phosphate + NADP(+) = 4-phospho-L-aspartate + NADPH + H(+). It functions in the pathway amino-acid biosynthesis; L-lysine biosynthesis via DAP pathway; (S)-tetrahydrodipicolinate from L-aspartate: step 2/4. Its pathway is amino-acid biosynthesis; L-methionine biosynthesis via de novo pathway; L-homoserine from L-aspartate: step 2/3. The protein operates within amino-acid biosynthesis; L-threonine biosynthesis; L-threonine from L-aspartate: step 2/5. Its function is as follows. Catalyzes the NADPH-dependent formation of L-aspartate-semialdehyde (L-ASA) by the reductive dephosphorylation of L-aspartyl-4-phosphate. The sequence is that of Aspartate-semialdehyde dehydrogenase (asd) from Pseudomonas aeruginosa (strain ATCC 15692 / DSM 22644 / CIP 104116 / JCM 14847 / LMG 12228 / 1C / PRS 101 / PAO1).